The primary structure comprises 217 residues: Ufm1-specific protease 1 (217 aa).

Active-site residues include C53, D175, and H177.

The protein belongs to the peptidase C78 family. As to expression, widely expressed. Expressed at higher level in brain, heart, kidney and skeletal muscle.

It localises to the cytoplasm. It is found in the cytosol. Thiol-dependent isopeptidase that specifically mediate the processing of UFM1 precursors as well as the deconjugation of UFM1 from target proteins. Mainly responsible for the maturation of the UFM1 precursor, a prerequisite for conjugation reactions. The protein is Ufm1-specific protease 1 of Mus musculus (Mouse).